Consider the following 280-residue polypeptide: Diaminopimelate epimerase (280 aa).

Substrate contacts are provided by Asn-15 and Asn-66. The active-site Proton donor is Cys-75. Substrate-binding positions include 76–77 (GN), Asn-163, Asn-196, and 214–215 (ER). Cys-223 acts as the Proton acceptor in catalysis. Position 224-225 (224-225 (GT)) interacts with substrate.

This sequence belongs to the diaminopimelate epimerase family. As to quaternary structure, homodimer.

The protein resides in the cytoplasm. The enzyme catalyses (2S,6S)-2,6-diaminopimelate = meso-2,6-diaminopimelate. The protein operates within amino-acid biosynthesis; L-lysine biosynthesis via DAP pathway; DL-2,6-diaminopimelate from LL-2,6-diaminopimelate: step 1/1. In terms of biological role, catalyzes the stereoinversion of LL-2,6-diaminopimelate (L,L-DAP) to meso-diaminopimelate (meso-DAP), a precursor of L-lysine and an essential component of the bacterial peptidoglycan. In Phocaeicola vulgatus (strain ATCC 8482 / DSM 1447 / JCM 5826 / CCUG 4940 / NBRC 14291 / NCTC 11154) (Bacteroides vulgatus), this protein is Diaminopimelate epimerase.